A 133-amino-acid polypeptide reads, in one-letter code: Interferon-induced transmembrane protein 3 (133 aa).

Topologically, residues 1 to 57 (MNHTVQTFFSPVNSGQPPNYEMLKEEHEVAVLGAPHNPAPPTSTVIHIRSETSVPDH) are cytoplasmic. Phosphotyrosine is present on Tyr-20. Lys-24 is covalently cross-linked (Glycyl lysine isopeptide (Lys-Gly) (interchain with G-Cter in ubiquitin)). The helical intramembrane region spans 58–78 (VVWSLFNTLFMNPCCLGFIAF). The interaction with SPP1 stretch occupies residues 60 to 93 (WSLFNTLFMNPCCLGFIAFAYSVKSRDRKMVGDV). S-palmitoyl cysteine attachment occurs at residues Cys-71 and Cys-72. Residues 79-107 (AYSVKSRDRKMVGDVTGAQAYASTAKCLN) lie on the Cytoplasmic side of the membrane. Residues Lys-83, Lys-88, and Lys-104 each participate in a glycyl lysine isopeptide (Lys-Gly) (interchain with G-Cter in ubiquitin) cross-link. Cys-105 carries the S-palmitoyl cysteine lipid modification. A helical membrane pass occupies residues 108 to 128 (IWALILGILMTILLIVIPVLI). Positions 108 to 133 (IWALILGILMTILLIVIPVLIFQAYG) are interaction with VAPA. Over 129–133 (FQAYG) the chain is Extracellular.

The protein belongs to the CD225/Dispanin family. As to quaternary structure, interacts with ATP6V0B. Interacts with CD81. Interacts with SPP1; the interaction reduces OPN expression. Interacts with VAPA. Interacts with BRI3 (isoforms 1 and 2); the interaction with isoform 2 is weaker than with isoform 1. Post-translationally, palmitoylation on membrane-proximal cysteines controls clustering in membrane compartments and antiviral activity against influenza virus and hepatitis C virus (HCV). Has no effect on anti-SARS-CoV-2 activity. Not glycosylated. In terms of processing, polyubiquitinated with both 'Lys-48' and 'Lys-63' linkages. Ubiquitination negatively regulates antiviral activity. Lys-24 is the most prevalent ubiquitination site. Post-translationally, phosphorylation at Tyr-20 is required for endosomal and lysosomal location.

The protein resides in the cell membrane. It is found in the late endosome membrane. The protein localises to the early endosome membrane. It localises to the lysosome membrane. Its subcellular location is the cytoplasm. The protein resides in the perinuclear region. Functionally, IFN-induced antiviral protein which disrupts intracellular cholesterol homeostasis. Inhibits the entry of viruses to the host cell cytoplasm by preventing viral fusion with cholesterol depleted endosomes. May inactivate new enveloped viruses which buds out of the infected cell, by letting them go out with a cholesterol depleted membrane. Active against multiple viruses, including influenza A virus, SARS coronaviruses (SARS-CoV and SARS-CoV-2), Marburg virus (MARV), Ebola virus (EBOV), Dengue virus (DNV), West Nile virus (WNV), human immunodeficiency virus type 1 (HIV-1), hepatitis C virus (HCV) and vesicular stomatitis virus (VSV). Can inhibit: influenza virus hemagglutinin protein-mediated viral entry, MARV and EBOV GP1,2-mediated viral entry, SARS-CoV and SARS-CoV-2 S protein-mediated viral entry and VSV G protein-mediated viral entry. Plays a critical role in the structural stability and function of vacuolar ATPase (v-ATPase). Establishes physical contact with the v-ATPase of endosomes which is critical for proper clathrin localization and is also required for the function of the v-ATPase to lower the pH in phagocytic endosomes thus establishing an antiviral state. In hepatocytes, IFITM proteins act in a coordinated manner to restrict HCV infection by targeting the endocytosed HCV virion for lysosomal degradation. IFITM2 and IFITM3 display anti-HCV activity that may complement the anti-HCV activity of IFITM1 by inhibiting the late stages of HCV entry, possibly in a coordinated manner by trapping the virion in the endosomal pathway and targeting it for degradation at the lysosome. Exerts opposing activities on SARS-CoV-2, including amphipathicity-dependent restriction of virus at endosomes and amphipathicity-independent enhancement of infection at the plasma membrane. The protein is Interferon-induced transmembrane protein 3 of Homo sapiens (Human).